The primary structure comprises 188 residues: Large ribosomal subunit protein eL18 (188 aa).

A disordered region spans residues 151–188 (HFGPAPGVPHSHTKPLVRSKGRKFERARGRRKSCGYKK). 2 stretches are compositionally biased toward basic residues: residues 161 to 171 (SHTKPLVRSKG) and 178 to 188 (RGRRKSCGYKK).

The protein belongs to the eukaryotic ribosomal protein eL18 family.

The protein localises to the cytoplasm. The protein is Large ribosomal subunit protein eL18 (RpL18) of Lysiphlebus testaceipes (Greenbugs aphid parastoid).